A 596-amino-acid chain; its full sequence is UvrABC system protein C (596 aa).

The GIY-YIG domain occupies 16-95 (SSPGVYRFYS…IKENKPKYNV (80 aa)). Positions 209 to 244 (SSVKKYYQEKMLSAAEDMQFEKAQFFKERYNSVLGL) constitute a UVR domain.

This sequence belongs to the UvrC family. As to quaternary structure, interacts with UvrB in an incision complex.

Its subcellular location is the cytoplasm. Functionally, the UvrABC repair system catalyzes the recognition and processing of DNA lesions. UvrC both incises the 5' and 3' sides of the lesion. The N-terminal half is responsible for the 3' incision and the C-terminal half is responsible for the 5' incision. This Cytophaga hutchinsonii (strain ATCC 33406 / DSM 1761 / CIP 103989 / NBRC 15051 / NCIMB 9469 / D465) protein is UvrABC system protein C.